The sequence spans 215 residues: Octanoyltransferase (215 aa).

Positions 31 to 206 (PDSQDEIWLV…QLVKHLDYAE (176 aa)) constitute a BPL/LPL catalytic domain. Substrate is bound by residues 70–77 (RGGQVTYH), 137–139 (SLG), and 150–152 (GLA). The active-site Acyl-thioester intermediate is Cys-168.

This sequence belongs to the LipB family.

The protein resides in the cytoplasm. The catalysed reaction is octanoyl-[ACP] + L-lysyl-[protein] = N(6)-octanoyl-L-lysyl-[protein] + holo-[ACP] + H(+). It functions in the pathway protein modification; protein lipoylation via endogenous pathway; protein N(6)-(lipoyl)lysine from octanoyl-[acyl-carrier-protein]: step 1/2. In terms of biological role, catalyzes the transfer of endogenously produced octanoic acid from octanoyl-acyl-carrier-protein onto the lipoyl domains of lipoate-dependent enzymes. Lipoyl-ACP can also act as a substrate although octanoyl-ACP is likely to be the physiological substrate. This is Octanoyltransferase from Pseudomonas putida (strain ATCC 700007 / DSM 6899 / JCM 31910 / BCRC 17059 / LMG 24140 / F1).